The sequence spans 207 residues: Lipid A acyltransferase PagP (207 aa).

A signal peptide spans 1–24 (MKFDLTAACTLSATLLVSSGTVFA). Active-site residues include His79, Asp122, and Ser123.

This sequence belongs to the lipid A palmitoyltransferase family. In terms of assembly, homodimer.

Its subcellular location is the cell outer membrane. The catalysed reaction is a lipid A + a 1,2-diacyl-sn-glycero-3-phosphocholine = a hepta-acyl lipid A + a 2-acyl-sn-glycero-3-phosphocholine. It carries out the reaction a lipid IVA + a 1,2-diacyl-sn-glycero-3-phosphocholine = a lipid IVB + a 2-acyl-sn-glycero-3-phosphocholine. It catalyses the reaction a lipid IIA + a 1,2-diacyl-sn-glycero-3-phosphocholine = a lipid IIB + a 2-acyl-sn-glycero-3-phosphocholine. Functionally, transfers a fatty acid residue from the sn-1 position of a phospholipid to the N-linked hydroxyfatty acid chain on the proximal unit of lipid A or its precursors. In Photorhabdus laumondii subsp. laumondii (strain DSM 15139 / CIP 105565 / TT01) (Photorhabdus luminescens subsp. laumondii), this protein is Lipid A acyltransferase PagP.